The primary structure comprises 433 residues: MPREKPHINVVFIGHVDHGKSTTVGRLKYDLGLIPESELEKIREEAKKYGKEEFVFAYLMDRQKEERARGVTIDIAHTELETPHNYITIVDAPGHKDFVKNMITGASQADAAVLVVAADDGVQEQTQEHAVLARTFGINQIIVYINKMDKVNYDQKRFEEVKNQVLKLLKMIGYKDENIIAVIPGASFHGDNVVKKSDKMPWYNGPTLYEALDMLKPPQLPVDLPLRIPIQSALSIKGIGTVLTGRVETGKLKPGDKIIVLPSKKPNGAIGEVKSIEMHHKPLEEALPGDNIGFSVRGIEKGDVMRGDVAGHLDNPPTVAEEIVALIHVIYHPSAITVGYAPVLHVHTAHVPVRFEELRGKVNPATGQVIEENPQALRPGEAAVVKLKPLKPVVIEPFDKIPQLGRFAIRDMGRTVAIGIARQVTPKQIEIKK.

One can recognise a tr-type G domain in the interval 5–220 (KPHINVVFIG…ALDMLKPPQL (216 aa)). Positions 14–21 (GHVDHGKS) are G1. 14-21 (GHVDHGKS) is a binding site for GTP. Ser-21 contributes to the Mg(2+) binding site. Residues 70–74 (GVTID) form a G2 region. Residues 91–94 (DAPG) are G3. Residues 91–95 (DAPGH) and 146–149 (NKMD) each bind GTP. Positions 146–149 (NKMD) are G4. Positions 186–188 (ASF) are G5.

It belongs to the TRAFAC class translation factor GTPase superfamily. Classic translation factor GTPase family. EF-Tu/EF-1A subfamily.

Its subcellular location is the cytoplasm. It catalyses the reaction GTP + H2O = GDP + phosphate + H(+). In terms of biological role, GTP hydrolase that promotes the GTP-dependent binding of aminoacyl-tRNA to the A-site of ribosomes during protein biosynthesis. The sequence is that of Elongation factor 1-alpha from Nanoarchaeum equitans (strain Kin4-M).